Reading from the N-terminus, the 461-residue chain is Fumarate hydratase class II (461 aa).

Residues 97–99, 127–130, 137–139, and Thr-185 contribute to the substrate site; these read SGT, HPND, and SSN. His-186 acts as the Proton donor/acceptor in catalysis. Ser-316 is a catalytic residue. Residues Ser-317 and 322–324 contribute to the substrate site; that span reads KVN.

Belongs to the class-II fumarase/aspartase family. Fumarase subfamily. As to quaternary structure, homotetramer.

It localises to the cytoplasm. It carries out the reaction (S)-malate = fumarate + H2O. Its pathway is carbohydrate metabolism; tricarboxylic acid cycle; (S)-malate from fumarate: step 1/1. Involved in the TCA cycle. Catalyzes the stereospecific interconversion of fumarate to L-malate. This Staphylococcus aureus (strain MSSA476) protein is Fumarate hydratase class II.